Consider the following 142-residue polypeptide: MAAAVKWAISNRTIWKHLLPIQNGALSSACHKSTYSSLPDDYNCQVDLALTADGRTIVCYHPSVDIPYEHTKPIPQPDLLHNNEETHEQILKAKLEVRKSKQLEQGPMIEQLSKVFYTTKHRWYPHGQYHNRRKKLNPPRDR.

A mitochondrion-targeting transit peptide spans 1-31; it reads MAAAVKWAISNRTIWKHLLPIQNGALSSACH.

This sequence belongs to the mitochondrion-specific ribosomal protein mL42 family. In terms of assembly, component of the mitochondrial ribosome large subunit (39S) which comprises a 16S rRNA and about 50 distinct proteins. Component of the mitochondrial ribosome small subunit (28S) which comprises a 12S rRNA and about 30 distinct proteins.

It localises to the mitochondrion. This Mus musculus (Mouse) protein is Large ribosomal subunit protein mL42 (Mrpl42).